We begin with the raw amino-acid sequence, 478 residues long: Solute carrier family 49 member 4 (478 aa).

A disordered region spans residues 1-27; that stretch reads MGSGWSSEEEERQPLLGPGLGPAPGAT. Residues 1–51 lie on the Cytoplasmic side of the membrane; it reads MGSGWSSEEEERQPLLGPGLGPAPGATRRGREAAAVLPAAGPSPGRVYGRR. A Di-leucine motif; mediates lysosomal localization motif is present at residues 15–16; it reads LL. The helical transmembrane segment at 52 to 72 threads the bilayer; the sequence is WLVLLLFSLLAFAQGLVWNTW. Residues 73–89 are Lumenal-facing; sequence GPIQNSARQAYSFTGWD. The helical transmembrane segment at 90-110 threads the bilayer; sequence IALLVLWGPIGFLPCFAFMWL. Residues 111–117 lie on the Cytoplasmic side of the membrane; sequence LDKRGLR. A helical transmembrane segment spans residues 118 to 138; the sequence is ITVLLTSFLMVLGTGLRCIPV. Residues 139 to 152 are Lumenal-facing; sequence SDLTLKKRLIHGGQ. A helical membrane pass occupies residues 153 to 173; the sequence is ILNGLAGPTVMNAAPFLSTTW. Topologically, residues 174-184 are cytoplasmic; that stretch reads FSADERATATA. The helical transmembrane segment at 185–205 threads the bilayer; the sequence is IASMLSYLGGACAFLVGPLVV. Over 206 to 229 the chain is Lumenal; that stretch reads PAPNGTAPLLTAESSRDHIKDRIE. N-linked (GlcNAc...) asparagine glycosylation occurs at Asn209. The chain crosses the membrane as a helical span at residues 230-250; the sequence is TVLYAEFGVVCLIFSATLAYF. The Cytoplasmic portion of the chain corresponds to 251-281; the sequence is PPRPPLPPSVAAASQRLSYRRSFCRLLSNLR. The helical transmembrane segment at 282–302 threads the bilayer; it reads FLMIALAYAIPLGVFAGWSGV. Over 303–314 the chain is Lumenal; it reads LDLILTPVHVSQ. A helical membrane pass occupies residues 315-335; sequence VDAGWIGFWSIVGGCVVGIAM. Over 336 to 347 the chain is Cytoplasmic; that stretch reads ARFADFIRGMLK. A helical transmembrane segment spans residues 348 to 368; it reads LILLLLFSGATLSSTWFTLTC. Topologically, residues 369 to 384 are lumenal; that stretch reads LNSVTHLPLTTVTLYA. Residues 385–405 traverse the membrane as a helical segment; it reads SCILLGVFLNSSVPIFFELFV. At 406–414 the chain is on the cytoplasmic side; sequence ETVYPVPEG. Residues 415 to 435 traverse the membrane as a helical segment; sequence ITCGVVTFLSNMFMGVLLFFV. Topologically, residues 436 to 442 are lumenal; it reads TFYHTEL. Residues 443 to 463 form a helical membrane-spanning segment; it reads SWFNWCLPGSCLLSLLLILCF. Over 464–478 the chain is Cytoplasmic; sequence RESYDRLYLDVVVSV.

This sequence belongs to the major facilitator superfamily. Post-translationally, cleaved in lysosomes by cathepsin L between Leu-214 and Ala-261, generating a N-glycosylated N-terminal and a non-glycosylated C-terminal fragment.

The protein resides in the lysosome membrane. The catalysed reaction is pyridoxine(out) + n H(+)(out) = pyridoxine(in) + n H(+)(in). In terms of biological role, mediates H(+)-dependent pyridoxine transport. The polypeptide is Solute carrier family 49 member 4 (Slc49a4) (Rattus norvegicus (Rat)).